A 118-amino-acid chain; its full sequence is HTH-type transcriptional regulator CmtR (118 aa).

An HTH arsR-type domain is found at 3–97; sequence TCEMRESALA…ELVQVVLAVD (95 aa). Cd(2+)-binding residues include C57, C61, and C102.

As to quaternary structure, homodimer.

Functionally, metal-responsive transcriptional repressor for the cmt operon. Binding of cadmium or lead causes the repressor to dissociate from the DNA. This is HTH-type transcriptional regulator CmtR (cmtR) from Mycobacterium bovis (strain ATCC BAA-935 / AF2122/97).